The primary structure comprises 174 residues: Photosystem II repair protein PSB27-H1, chloroplastic (174 aa).

The disordered stretch occupies residues 1–35; sequence MASASATATLLKPNLPPHKPTIIASSVSPPLPPPR. The residue at position 94 (threonine 94) is a Phosphothreonine. At tyrosine 132 the chain carries Phosphotyrosine.

Belongs to the Psb27 family.

The protein resides in the plastid. Its subcellular location is the chloroplast thylakoid membrane. Probably involved in repair of photodamaged photosystem II (PSII). This is Photosystem II repair protein PSB27-H1, chloroplastic (PSB27-1) from Arabidopsis thaliana (Mouse-ear cress).